A 225-amino-acid chain; its full sequence is Heptaprenylglyceryl phosphate synthase (225 aa).

Residue Lys6 participates in sn-glycerol 1-phosphate binding. 2 residues coordinate Mg(2+): Asp8 and Thr34. Sn-glycerol 1-phosphate is bound by residues 153–158 (YVEYSG), Gly183, and 203–204 (GN).

It belongs to the GGGP/HepGP synthase family. Group I subfamily. As to quaternary structure, homodimer. The cofactor is Mg(2+).

It carries out the reaction sn-glycerol 1-phosphate + all-trans-heptaprenyl diphosphate = 3-heptaprenyl-sn-glycero-1-phosphate + diphosphate. The protein operates within membrane lipid metabolism; glycerophospholipid metabolism. Prenyltransferase that catalyzes in vivo the transfer of the heptaprenyl moiety of heptaprenyl pyrophosphate (HepPP; 35 carbon atoms) to the C3 hydroxyl of sn-glycerol-1-phosphate (G1P), producing heptaprenylglyceryl phosphate (HepGP). This reaction is an ether-bond-formation step in the biosynthesis of archaea-type G1P-based membrane lipids found in Bacillales. This Listeria monocytogenes serotype 4b (strain F2365) protein is Heptaprenylglyceryl phosphate synthase.